The chain runs to 134 residues: ATP synthase epsilon chain (134 aa).

Belongs to the ATPase epsilon chain family. F-type ATPases have 2 components, CF(1) - the catalytic core - and CF(0) - the membrane proton channel. CF(1) has five subunits: alpha(3), beta(3), gamma(1), delta(1), epsilon(1). CF(0) has three main subunits: a, b and c.

Its subcellular location is the cellular thylakoid membrane. Its function is as follows. Produces ATP from ADP in the presence of a proton gradient across the membrane. This is ATP synthase epsilon chain from Prochlorococcus marinus (strain AS9601).